A 129-amino-acid polypeptide reads, in one-letter code: Small ribosomal subunit protein uS8 (129 aa).

The protein belongs to the universal ribosomal protein uS8 family. In terms of assembly, part of the 30S ribosomal subunit.

In terms of biological role, one of the primary rRNA binding proteins, it binds directly to 16S rRNA central domain where it helps coordinate assembly of the platform of the 30S subunit. The protein is Small ribosomal subunit protein uS8 of Thermoplasma volcanium (strain ATCC 51530 / DSM 4299 / JCM 9571 / NBRC 15438 / GSS1).